Consider the following 431-residue polypeptide: MNIAVIGLSHKTAPVEVREKLSLPETEIQNAISELCSGTYTQEVGILSTCNRLEIYVVTNEMQPGIREVTQFLSESSKIPLNQLRPHLFMLLHEDSIMHLMRVASGLDSLVLGEGQILAQVKQTHKLGQKYKGIGRILNRLFKQAVTAGKRVRTETSIGTGAVSVSSAAVELAQMKLEDLSNYQVAIVGAGKMSKLLVQHLLAKGANKISIINRSVGRAQDLANSFKDANIKVYSMLEMVQVIGESDLVFTSTAATELILDKAKLETILDPLKPLMLVDISVPRNIGNDVSELPNVRCFNVDDLKAVVAQNRESRRQMAMEAEVLLEEEVEAFDVWWKSLETVPTINSLRQKIETIREQELEKALSRLGSEFAEKHQEVIEALTRGIVNKILHDPMVQLRAQQDIEARRHAMETLQLLFNLESEMSSGKVI.

Residues 49 to 52, Ser109, 114 to 116, and Gln120 each bind substrate; these read TCNR and EGQ. The active-site Nucleophile is the Cys50. 189–194 contacts NADP(+); sequence GAGKMS.

The protein belongs to the glutamyl-tRNA reductase family. Homodimer.

The enzyme catalyses (S)-4-amino-5-oxopentanoate + tRNA(Glu) + NADP(+) = L-glutamyl-tRNA(Glu) + NADPH + H(+). The protein operates within porphyrin-containing compound metabolism; protoporphyrin-IX biosynthesis; 5-aminolevulinate from L-glutamyl-tRNA(Glu): step 1/2. Its pathway is porphyrin-containing compound metabolism; chlorophyll biosynthesis. Catalyzes the NADPH-dependent reduction of glutamyl-tRNA(Glu) to glutamate 1-semialdehyde (GSA). The chain is Glutamyl-tRNA reductase from Trichodesmium erythraeum (strain IMS101).